Here is a 136-residue protein sequence, read N- to C-terminus: Putative pre-16S rRNA nuclease (136 aa).

Belongs to the YqgF nuclease family.

It is found in the cytoplasm. Could be a nuclease involved in processing of the 5'-end of pre-16S rRNA. In Francisella tularensis subsp. tularensis (strain FSC 198), this protein is Putative pre-16S rRNA nuclease.